A 115-amino-acid polypeptide reads, in one-letter code: Nucleoid-associated protein LA_4332 (115 aa).

It belongs to the YbaB/EbfC family. Homodimer.

It localises to the cytoplasm. Its subcellular location is the nucleoid. Its function is as follows. Binds to DNA and alters its conformation. May be involved in regulation of gene expression, nucleoid organization and DNA protection. This Leptospira interrogans serogroup Icterohaemorrhagiae serovar Lai (strain 56601) protein is Nucleoid-associated protein LA_4332.